A 114-amino-acid chain; its full sequence is BolA-like protein DDB_G0274169 (114 aa).

The span at 88 to 98 (TQWKKNNQTKI) shows a compositional bias: polar residues. Residues 88 to 114 (TQWKKNNQTKINVDDDKSPSCKGGFGK) are disordered.

This sequence belongs to the BolA/IbaG family.

This is BolA-like protein DDB_G0274169 from Dictyostelium discoideum (Social amoeba).